Consider the following 314-residue polypeptide: Homoserine kinase (314 aa).

95 to 105 (PHSRGLGSSAA) is an ATP binding site.

The protein belongs to the GHMP kinase family. Homoserine kinase subfamily.

The protein resides in the cytoplasm. It catalyses the reaction L-homoserine + ATP = O-phospho-L-homoserine + ADP + H(+). It participates in amino-acid biosynthesis; L-threonine biosynthesis; L-threonine from L-aspartate: step 4/5. In terms of biological role, catalyzes the ATP-dependent phosphorylation of L-homoserine to L-homoserine phosphate. In Mycobacterium sp. (strain JLS), this protein is Homoserine kinase.